Here is a 292-residue protein sequence, read N- to C-terminus: MNPFWNMPSASVRKRSDNDEKIATADQKISPARSSSAKKQLPSIPKNAVPITKPISPPLSVQSTNGTHASYGPFYLEYSLLAEFTLVVKQKLPGVYVQPSYSSALMWFGVIFIRHGLYQDGVFKFTVYIPDNYPDGECPRLVFDIPVFHPLVDPISGELDVKRAFTKWRRNHNHIWQVLMYARRIFYKIDTTSPLNPEAAVLYEKDVQLFKSKVVDSVKLCNSHLFDKPKIEDPYAIIFSPWNPVLHDDARERMLAQKKSEEQSRGLHVSGLSWVKPGSVLPFSKEENSLQT.

Positions 1 to 44 (MNPFWNMPSASVRKRSDNDEKIATADQKISPARSSSAKKQLPSI) are disordered. Positions 14–23 (KRSDNDEKIA) are enriched in basic and acidic residues. In terms of domain architecture, UBC core spans 75–223 (YLEYSLLAEF…VVDSVKLCNS (149 aa)).

It belongs to the ubiquitin-conjugating enzyme family. FTS subfamily.

It localises to the cytoplasm. The protein localises to the cell membrane. Its function is as follows. May function to promote vesicle trafficking and/or fusion. May also regulate apoptosis. The protein is AKT-interacting protein homolog B (aktip-b) of Xenopus laevis (African clawed frog).